Consider the following 530-residue polypeptide: [Pyruvate dehydrogenase [acetyl-transferring]]-phosphatase 2, mitochondrial (530 aa).

Residues 1 to 67 constitute a mitochondrion transit peptide; that stretch reads MSSTASYRIF…FALRKAYRHT (67 aa). Residues 107–518 form the PPM-type phosphatase domain; sequence VLRFESNQLA…DDITVMVVFF (412 aa). The Mn(2+) site is built by D142, G143, D413, and D509.

It belongs to the PP2C family. Mg(2+) serves as cofactor. As to expression, highly expressed in liver.

The protein localises to the mitochondrion. It catalyses the reaction O-phospho-L-seryl-[pyruvate dehydrogenase E1 alpha subunit] + H2O = L-seryl-[pyruvate dehydrogenase E1 alpha subunit] + phosphate. With respect to regulation, mg(2+)-dependent protein phosphatase. Phosphatase activity is increased in the presence of spermine, a naturally produced polyamine. Its function is as follows. Mitochondrial enzyme that catalyzes the dephosphorylation and concomitant reactivation of the alpha subunit of the E1 component of the pyruvate dehydrogenase complex (PDC), thereby stimulating the conversion of pyruvate into acetyl-CoA. Acts as a crucial regulator of T cell metabolism and function, with a particular focus on T-helper Th17. This is [Pyruvate dehydrogenase [acetyl-transferring]]-phosphatase 2, mitochondrial (Pdp2) from Rattus norvegicus (Rat).